Consider the following 334-residue polypeptide: Protein NlpD/LppB homolog (334 aa).

The LysM domain occupies 89–133 (IFYIVKSKDTMYSIAKNSGYNYHELSKFNSIKKPYKIIIGQKIWM).

This sequence belongs to the E.coli NlpD/Haemophilus LppB family.

This Buchnera aphidicola subsp. Acyrthosiphon pisum (strain APS) (Acyrthosiphon pisum symbiotic bacterium) protein is Protein NlpD/LppB homolog.